The following is a 315-amino-acid chain: BTB/POZ domain-containing adapter for CUL3-mediated RhoA degradation protein 3 (315 aa).

Met-1 bears the N-acetylmethionine mark. Ser-23 bears the Phosphoserine mark. In terms of domain architecture, BTB spans 32–100 (KYVKLNVGGA…LRDGGVPLPE (69 aa)). A PCNA-binding motif is present at residues 239 to 245 (QTKVEFP). The interval 269-294 (NALLEATGGAAGRSHHLDEDEERERE) is disordered.

Belongs to the BACURD family. Homotetramer; forms a two-fold symmetric tetramer in solution. Interacts with CUL3; interaction is direct and forms a 5:5 heterodecamer. Component of the BCR(BACURD3) E3 ubiquitin ligase complex, at least composed of CUL3, KCTD10/BACURD3 and RBX1. Interacts with DNA polymerase delta subunit 2/POLD2. Interacts with PCNA. Associated with the tectonic-like complex (also named B9 complex); however as Kctd10 has not been identified in all tectonic-like complexes purifications it is unclear whether it is really part of the complex.

It localises to the nucleus. It participates in protein modification; protein ubiquitination. In terms of biological role, substrate-specific adapter of a BCR (BTB-CUL3-RBX1) E3 ubiquitin-protein ligase complex. The BCR(BACURD3) E3 ubiquitin ligase complex mediates the ubiquitination of target proteins, leading to their degradation by the proteasome. This Mus musculus (Mouse) protein is BTB/POZ domain-containing adapter for CUL3-mediated RhoA degradation protein 3 (Kctd10).